The sequence spans 492 residues: Diacylglycerol kinase 7 (492 aa).

Residues 90 to 248 (APHAPMVVFI…SWKIVVSMPS (159 aa)) form the DAGKc domain.

It belongs to the eukaryotic diacylglycerol kinase family. As to quaternary structure, monomer. In terms of tissue distribution, highly expressed in flowers, and at low levels in roots, stems and leaves.

It carries out the reaction a 1,2-diacyl-sn-glycerol + ATP = a 1,2-diacyl-sn-glycero-3-phosphate + ADP + H(+). In terms of biological role, phosphorylates the second messenger diacylglycerol (DAG) to generate phosphatidic acid (PA), another important signaling molecule. PA is required for plant development and responses to abiotic stress and pathogen attack. May be involved in the accumulation of PA during cold stress xhibits high specificity for 1,2-dioleoyl-sn-glycerol (1,2-DOG), 1-palmitoyl, 2-oleoyl-sn-glycerol (1,2 POG), 1-stearoyl, 2-linoleoyl-sn-glycerol (1,2-SLG) and 1-oleoyl, 2-palmitoyl-sn-glycerol (1,2-OPG). The chain is Diacylglycerol kinase 7 (DGK7) from Arabidopsis thaliana (Mouse-ear cress).